A 365-amino-acid chain; its full sequence is uncharacterized protein (365 aa).

The stretch at 18–46 (TAQEALTLIEKLDSDYKEKEEKITALSVH) forms a coiled coil.

This is an uncharacterized protein from Bacillus subtilis (strain 168).